Consider the following 600-residue polypeptide: Ligand-dependent nuclear receptor corepressor-like protein (600 aa).

Disordered regions lie at residues 1–24 (MEKG…QCRS), 102–122 (SVIG…GQSN), and 495–519 (DGTS…KRGR). Residues 104 to 122 (IGSSQSTPTEELSSQGQSN) show a composition bias toward polar residues. One can recognise an HTH psq-type domain in the interval 514 to 566 (RKKRGRYRQYDHEIMEEAIAMVMSGKMSVSKAQGIYGVPHSTLEYKVKERSGT). Positions 542 to 562 (VSKAQGIYGVPHSTLEYKVKE) form a DNA-binding region, H-T-H motif. A disordered region spans residues 581–600 (GLFNMTDSGTGSCKTSSKPV). The span at 583 to 600 (FNMTDSGTGSCKTSSKPV) shows a compositional bias: polar residues.

It is found in the nucleus. Functionally, may act as transcription activator that binds DNA elements with the sequence 5'-CCCTATCGATCGATCTCTACCT-3'. In Gallus gallus (Chicken), this protein is Ligand-dependent nuclear receptor corepressor-like protein (LCORL).